Consider the following 162-residue polypeptide: Phosphopantetheine adenylyltransferase (162 aa).

Residue Thr14 coordinates substrate. Residues Thr14 to Phe15 and His22 each bind ATP. 3 residues coordinate substrate: Lys46, Leu78, and Arg92. Residues Gly93–Arg95, Glu103, and His128–Ser134 contribute to the ATP site.

This sequence belongs to the bacterial CoaD family. In terms of assembly, homohexamer. Mg(2+) is required as a cofactor.

It is found in the cytoplasm. The catalysed reaction is (R)-4'-phosphopantetheine + ATP + H(+) = 3'-dephospho-CoA + diphosphate. It functions in the pathway cofactor biosynthesis; coenzyme A biosynthesis; CoA from (R)-pantothenate: step 4/5. Reversibly transfers an adenylyl group from ATP to 4'-phosphopantetheine, yielding dephospho-CoA (dPCoA) and pyrophosphate. This is Phosphopantetheine adenylyltransferase from Xylella fastidiosa (strain M23).